A 537-amino-acid chain; its full sequence is Extracellular exo-inulinase inuE (537 aa).

The N-terminal stretch at 1-19 is a signal peptide; that stretch reads MARLLKAVTVCALAGIAHA. Residue Asp-41 is part of the active site. Residues Asn-49, Asn-67, Asn-112, Asn-300, Asn-363, Asn-398, Asn-430, and Asn-531 are each glycosylated (N-linked (GlcNAc...) asparagine).

This sequence belongs to the glycosyl hydrolase 32 family.

The protein resides in the secreted. The catalysed reaction is Hydrolysis of terminal, non-reducing (2-&gt;1)- and (2-&gt;6)-linked beta-D-fructofuranose residues in fructans.. In terms of biological role, exo-inulinase involved in utilization of the plant storage polymer inulin, consisting of fructooligosaccharides with a degree of polymerization (DP) value from 2 to 60. Splits off terminal fructose units successively from the non-reducing end of the inulin molecule, and also hydrolyze sucrose and raffinose. This is Extracellular exo-inulinase inuE (inuE) from Aspergillus niger (strain ATCC MYA-4892 / CBS 513.88 / FGSC A1513).